The following is a 280-amino-acid chain: MRKPEVAIAASTHQVKKMKKGLWSPEEDSKLMQYMLSNGQGCWSDVAKNAGLQRCGKSCRLRWINYLRPDLKRGAFSPQEEDLIIRFHSILGNRWSQIAARLPGRTDNEIKNFWNSTIKKRLKKMSDTSNLINNSSSSPNTASDSSSNSASSLDIKDIIGSFMSLQEQGFVNPSLTHIQTNNPFPTGNMISHPCNDDFTPYVDGIYGVNAGVQGELYFPPLECEEGDWYNANINNHLDELNTNGSGNAPEGMRPVEEFWDLDQLMNTEVPSFYFNFKQSI.

2 consecutive HTH myb-type domains span residues Val-15–Leu-67 and Arg-68–Leu-122. 2 consecutive DNA-binding regions (H-T-H motif) follow at residues Trp-43 to Leu-67 and Trp-95 to Ile-118. Positions Ser-129–Ala-150 are disordered.

In terms of tissue distribution, expressed at low levels in stems and siliques, specifically in xylem.

Its subcellular location is the nucleus. In terms of biological role, transcription activator. Involved in the regulation of secondary wall biosynthesis in fibers and vessels. Transcription activator of the mannan synthase CSLA9 that recognizes and binds to the DNA consensus sequence 5'-[AG][GT]T[AT]GGT[GA]-3' cis-regulatory element of CSLA9 promoter. Transcription factor that acts as a molecular switch in the NAC012/SND1-mediated transcriptional network regulating secondary wall biosynthesis. Is directly activated by NAC012/SND1. Functions redundantly with MYB83 in the transcriptional regulatory cascade leading to secondary wall formation in fibers and vessels. Transcription activator that binds to the DNA consensus sequence 5'-ACC[AT]A[AC][TC]-3', designated as the secondary wall MYB-responsive element (SMRE). Regulates directly numerous transcription factors and a number of genes involved in secondary wall biosynthesis that contain SMRE elements in their promoters. Is an obligate component of the transcriptional regulatory complex toward the commitment of secondary wall cellulose synthesis. Is required for functional expression of the three secondary wall CESA genes, CESA4, CESA7 and CESA8. The chain is Transcription factor MYB46 from Arabidopsis thaliana (Mouse-ear cress).